Consider the following 108-residue polypeptide: Iron-sulfur cluster assembly protein CyaY (108 aa).

Belongs to the frataxin family.

Its function is as follows. Involved in iron-sulfur (Fe-S) cluster assembly. May act as a regulator of Fe-S biogenesis. This Pseudoalteromonas atlantica (strain T6c / ATCC BAA-1087) protein is Iron-sulfur cluster assembly protein CyaY.